Reading from the N-terminus, the 278-residue chain is MYISNQIDPEWPRSTGCGPVGAISRATLICNLCALARSRPAMQTLPNSLPTQVTFKGTLEGLRLLIPVALPWEEVVLQLQHRLNAGERLWQGGAVVILEVGERLLDGPQLQAVTEMLTAQQLHLMRVRTVRRQTAVAAAVAGLSVEQQEAPPEENPDKPPALRGLAEPLYLQTTLRSGMSLVHPGTVIVVGDVNPGAEIVADGDILVWGTLRGVAHAGAHGNTRALIFALRLRPIQLRIADRVARASDEPPAAPQPEVAYIQDNTIHIAITTEFARRW.

The protein belongs to the MinC family. Interacts with MinD and FtsZ.

In terms of biological role, cell division inhibitor that blocks the formation of polar Z ring septums. Rapidly oscillates between the poles of the cell to destabilize FtsZ filaments that have formed before they mature into polar Z rings. Prevents FtsZ polymerization. In Gloeobacter violaceus (strain ATCC 29082 / PCC 7421), this protein is Probable septum site-determining protein MinC.